A 178-amino-acid polypeptide reads, in one-letter code: MKIQDYTKEMVDEKSFIDMAYTLLNDKQTTMNLYDIIDEFKSLGGYEYEDIENRIVQFYTDLNTDGRFLNVGENLWGLRDWYSVDDIEEKIAPTIQKFDILDDEDEEDQNLKLLGDDDADEDDDIPAQTDDQETLDESDNDEDDVEMNEADIVIDEDEDEDIAEGEEEAFEDAEDFND.

Positions 14–81 (KSFIDMAYTL…GENLWGLRDW (68 aa)) constitute an HTH HARE-type domain. The disordered stretch occupies residues 114–178 (LGDDDADEDD…AFEDAEDFND (65 aa)). Positions 116–178 (DDDADEDDDI…AFEDAEDFND (63 aa)) are enriched in acidic residues.

Belongs to the RpoE family. In terms of assembly, RNAP is composed of a core of 2 alpha, a beta and a beta' subunits. The core is associated with a delta subunit and one of several sigma factors.

In terms of biological role, participates in both the initiation and recycling phases of transcription. In the presence of the delta subunit, RNAP displays an increased specificity of transcription, a decreased affinity for nucleic acids, and an increased efficiency of RNA synthesis because of enhanced recycling. This chain is Probable DNA-directed RNA polymerase subunit delta, found in Staphylococcus epidermidis (strain ATCC 35984 / DSM 28319 / BCRC 17069 / CCUG 31568 / BM 3577 / RP62A).